We begin with the raw amino-acid sequence, 1341 residues long: MVYSYTEKKRIRKDFGKRPRVLDAPYLLSIQLDSFKKFIEQDPEGHYGLEAAFRSVFPIQSYNGNSELQYVSYRLGEPVFDVKECQIRGVTYSAPLRVKLRLVMYDKDAPAGTVKDIKEQEVYMGEIPLMTDNGTFVINGTERVIVSQLHRSPGVFFDSDKGKTHSSGKVLYNARVIPYRGSWLDFEFDPKDNVFVRIDRRRKLAASVILRALDYTTEQILDMFFDKVSFEVQGKSLVMELVPERLRGETASFDIEANGKVYVEQGRRITARHIRQLGKDGVDQIEVPVEYIVGKISSRDYVNEETGELIAAANQELNLEILALLSQAGHKSIEVLFTNDLDYGPYMSETLRVDSTTDRLSALVEIYRMMRPGEPPTREAAEQLFNSLFFSEDRYDLSAVGRMKFNSSLLREETTGSGILDHSDIIEVMKKLIEIRNGRGEVDDIDHLGNRRIRSVGEMAENQFRVGLVRVERAVKERLSLGDLDAIMPQDLINAKPISAAVKEFFGSSQLSQFMDQNNPLSEVTHKRRISALGPGGLTRERAGFEVRDVHATHYGRLCPIETPEGPNIGLINSLSVYARCNSYGFLETPYRKVVDSKVTDQIDYLSAIEEGQYVIAQANAALETDGSFSDELITARQKGDSGLHPRDHVQYMDVATNQVVSVAASLIPFLEHDDANRALMGANMQRQAVPTLRADKPLVGTGIERSVAVDSGVTAVAKRGGQVQSVDASRIVVKVNEDELVPGEAGIDIYNLTKYTRSNQNTCINQRPTVMPGEPVARGDVLADGPSTDLGELALGQNIRIAFMPWNGYNFEDSILVSERVVQQDRLTTIHIQELSCVARDTKLGSEEITADIPNVGEAALSKLDESGIVYIGAEVKGGDILVGKVTPKGETQLTPEEKLLRAIFGEKASDVKDSSLRVPNSVSGTIIDVQVFTRDGVEKDKRALEIEEMQLKEAKKDITEEFQILEGGLLARVRTLLLSIGYSEEKIASMDRERLFALTLDDESLQNQLEQLAEQYDELKAEFDKKFETKRRKITQGDDLAPGVLKIVKVYLAVKRRIQPGDKMAGRHGNKGVISKICPVEDMPYDEKGQTVEIVLNPLGVPSRMNIGQILETHMGLAAKGIGDKLNEMLKQQQELHKFRNFLQKVYDLGDTRQDVDIAALSDDQVHTLVQNLRDGLPIATPVFDGAPESSIKELLKLGDLPESGQLKMFDGRTGDMFERPVTVGYMYMLKLNHLVDDKMHARSTGSYSLVTQQPLGGKAQFGGQRFGEMEVWALEAYGAAFTLQEMLTVKSDDVNGRTKMYKNIVDGDHRMEPGMPESFNVLLKEIRSLGINIELEDK.

This sequence belongs to the RNA polymerase beta chain family. The RNAP catalytic core consists of 2 alpha, 1 beta, 1 beta' and 1 omega subunit. When a sigma factor is associated with the core the holoenzyme is formed, which can initiate transcription.

The enzyme catalyses RNA(n) + a ribonucleoside 5'-triphosphate = RNA(n+1) + diphosphate. Its function is as follows. DNA-dependent RNA polymerase catalyzes the transcription of DNA into RNA using the four ribonucleoside triphosphates as substrates. The protein is DNA-directed RNA polymerase subunit beta of Photobacterium profundum (strain SS9).